We begin with the raw amino-acid sequence, 160 residues long: Protein-export protein SecB (160 aa).

Belongs to the SecB family. As to quaternary structure, homotetramer, a dimer of dimers. One homotetramer interacts with 1 SecA dimer.

The protein localises to the cytoplasm. Functionally, one of the proteins required for the normal export of preproteins out of the cell cytoplasm. It is a molecular chaperone that binds to a subset of precursor proteins, maintaining them in a translocation-competent state. It also specifically binds to its receptor SecA. In Rhodospirillum rubrum (strain ATCC 11170 / ATH 1.1.1 / DSM 467 / LMG 4362 / NCIMB 8255 / S1), this protein is Protein-export protein SecB.